The chain runs to 145 residues: uncharacterized protein (145 aa).

This is an uncharacterized protein from Bacillus anthracis.